A 385-amino-acid polypeptide reads, in one-letter code: ELAV-like protein 4 (385 aa).

The disordered stretch occupies residues 12–48 (TMEPQVSNGPTSNTSNGPSSNNRNCPSPMQTGAATDD). Residues 18-33 (SNGPTSNTSNGPSSNN) show a composition bias toward low complexity. Residues 34–44 (RNCPSPMQTGA) show a composition bias toward polar residues. Ser-38 carries the post-translational modification Phosphoserine. RRM domains lie at 51 to 129 (TNLI…YARP) and 137 to 217 (ANLY…FANN). Phosphoserine is present on Ser-233. Arg-248 carries the post-translational modification Asymmetric dimethylarginine; by CARM1; alternate. Arg-248 is modified (omega-N-methylarginine; by CARM1; alternate). In terms of domain architecture, RRM 3 spans 302-380 (WCIFVYNLSP…RVLQVSFKTN (79 aa)).

The protein belongs to the RRM elav family. As to quaternary structure, component of a TAU mRNP complex, at least composed of IGF2BP1, ELAVL4 and G3BP. Associates with the EIF4F cap-binding complex, composed of EIF4G, EIF4A, EIF4E and PABP. Within the EIF4F cap-binding complex, interacts with EIF4A. Interacts with SMN (via Tudor domain) in an RNA-independent manner; the interaction is required for localization of ELAVL4 to RNA granules. Interacts with MAP1 light chain LC1 (via C-terminus); the interaction contributes to the association of ELAVL4 with microtubules. Interacts with MAP1 light chain LC2. Methylated by CARM1, which leads to reduced RNA-binding activity and enhanced interaction with SMN. Methylation at Arg-248 by CARM1 weakens protective binding to the 3'UTR of CDKN1A mRNA and down-regulates CDKN1A protein expression, thereby maintaining cells in a proliferative state. Methylation is inhibited by NGF, which facilitates neurite outgrowth. As to expression, expressed in the brain, including the hippocampus, and in pancreatic beta cells (at protein level). Expressed in pyramidal neurons of the hippocampal CA3 and CA1 region and in the hilus but not in dentate granule cells (at protein level). Expressed in the dorsal root ganglion and the spinal cord (at protein level). Expressed in neural stem and progenitor cells (at protein level). Expressed in radial glia-like cells and in transient amplifying cells in the subventricular zone (SVZ), and in immature neurons both in the SVZ and the rostral migratory stream as well as in mature neurons in the olfactory bulb (at protein level). Expressed in testis and in the brain, including the hippocampus, the neocortex and the cerebellum. Expressed in lower- but not upper-layer primary neurons of the mature neocortex, in the hippocampal regions CA1-3 and the dentate gyrus. Expressed in the mitral and granule cells of the olfactory bulb, cerebral cortex, entorhinal cortex, thalamus, medial habenula, amygdala, granule cells of the cerebellum, pons, olivary nucleus, dorsal and ventral spinal cord and in dorsal root ganglia. Expressed in motor neurons. Isoform 4: Expressed in the brain. Isoform 5: Expressed in the brain. Isoform 6: Expressed in the brain. Isoform 7: Expressed in the brain. Isoform 8: Expressed in the brain. Isoform 9: Expressed in the brain. Isoform 10: Expressed in the brain. Isoform 11: Expressed in the brain.

The protein localises to the cytoplasm. It localises to the perikaryon. Its subcellular location is the cell projection. The protein resides in the dendrite. It is found in the axon. The protein localises to the growth cone. Its function is as follows. RNA-binding protein that is involved in the post-transcriptional regulation of mRNAs. Plays a role in the regulation of mRNA stability, alternative splicing and translation. Binds to AU-rich element (ARE) sequences in the 3' untranslated region (3'UTR) of target mRNAs, including GAP43, VEGF, FOS, CDKN1A and ACHE mRNA. Many of the target mRNAs are coding for RNA-binding proteins, transcription factors and proteins involved in RNA processing and/or neuronal development and function. By binding to the mRNA 3'UTR, decreases mRNA deadenylation and thereby contributes to the stabilization of mRNA molecules and their protection from decay. Also binds to the polyadenylated (poly(A)) tail in the 3'UTR of mRNA, thereby increasing its affinity for mRNA binding. Mainly plays a role in neuron-specific RNA processing by stabilization of mRNAs such as GAP43, ACHE and mRNAs of other neuronal proteins, thereby contributing to the differentiation of neural progenitor cells, nervous system development, learning and memory mechanisms. Involved in the negative regulation of the proliferative activity of neuronal stem cells and in the positive regulation of neuronal differentiation of neural progenitor cells. Promotes neuronal differentiation of neural stem/progenitor cells in the adult subventricular zone of the hippocampus by binding to and stabilizing SATB1 mRNA. Binds and stabilizes MSI1 mRNA in neural stem cells. Exhibits increased binding to ACHE mRNA during neuronal differentiation, thereby stabilizing ACHE mRNA and enhancing its expression. Protects CDKN1A mRNA from decay by binding to its 3'-UTR. May bind to APP and BACE1 mRNAS and the BACE1AS lncRNA and enhance their stabilization. Plays a role in neurite outgrowth and in the establishment and maturation of dendritic arbors, thereby contributing to neocortical and hippocampal circuitry function. Stabilizes GAP43 mRNA and protects it from decay during postembryonic development in the brain. By promoting the stabilization of GAP43 mRNA, plays a role in NGF-mediated neurite outgrowth. Binds to BDNF long 3'UTR mRNA, thereby leading to its stabilization and increased dendritic translation after activation of PKC. By increasing translation of BDNF after nerve injury, may contribute to nerve regeneration. Acts as a stabilizing factor by binding to the 3'UTR of NOVA1 mRNA, thereby increasing its translation and enhancing its functional activity in neuron-specific splicing. Stimulates translation of mRNA in a poly(A)- and cap-dependent manner, possibly by associating with the EIF4F cap-binding complex. May also negatively regulate translation by binding to the 5'UTR of Ins2 mRNA, thereby repressing its translation. Upon glucose stimulation, Ins2 mRNA is released from ELAVL4 and translational inhibition is abolished. Also plays a role in the regulation of alternative splicing. May regulate alternative splicing of CALCA pre-mRNA into Calcitonin and Calcitonin gene-related peptide 1 (CGRP) by competing with splicing regulator TIAR for binding to U-rich sequences of CALCA pre-mRNA. The polypeptide is ELAV-like protein 4 (Elavl4) (Mus musculus (Mouse)).